The chain runs to 453 residues: Probable 1,4-beta-D-glucan cellobiohydrolase A (453 aa).

The signal sequence occupies residues 1-17; that stretch reads MYQRALLFSALATAVSA. Glutamate 226 functions as the Nucleophile in the catalytic mechanism. Glutamate 231 (proton donor) is an active-site residue. Asparagine 284 is a glycosylation site (N-linked (GlcNAc...) asparagine).

Belongs to the glycosyl hydrolase 7 (cellulase C) family.

The protein localises to the secreted. It carries out the reaction Hydrolysis of (1-&gt;4)-beta-D-glucosidic linkages in cellulose and cellotetraose, releasing cellobiose from the non-reducing ends of the chains.. Its function is as follows. The biological conversion of cellulose to glucose generally requires three types of hydrolytic enzymes: (1) Endoglucanases which cut internal beta-1,4-glucosidic bonds; (2) Exocellobiohydrolases that cut the disaccharide cellobiose from the non-reducing end of the cellulose polymer chain; (3) Beta-1,4-glucosidases which hydrolyze the cellobiose and other short cello-oligosaccharides to glucose. The chain is Probable 1,4-beta-D-glucan cellobiohydrolase A (cbhA) from Aspergillus clavatus (strain ATCC 1007 / CBS 513.65 / DSM 816 / NCTC 3887 / NRRL 1 / QM 1276 / 107).